Consider the following 124-residue polypeptide: MKNVLIIFGKPYCSICENVSEAVEELKSEYDILHVDILSFFLKDGASSMLGDVKRGTLIGNFAAHLSNYIVSIFKYNPQTKQMAFVDINKSLDFTKTDKSLVNLEILKSEIEKATYGVWPPVTE.

Cysteine 13 and cysteine 16 are joined by a disulfide.

It belongs to the glutaredoxin family. Homodimer.

The protein resides in the host cytoplasm. Glutaredoxin necessary for virion morphogenesis and virus replication. Functions as a thiol-disulfide transfer protein between membrane-associated OPG128 and substrates OPG095 or OPG053. The complete pathway for formation of disulfide bonds in intracellular virion membrane proteins sequentially involves oxidation of OPG072, OPG128 and OPG088. Exhibit thioltransferase and dehydroascorbate reductase activities in vitro. The chain is Glutaredoxin-2 (OPG088) from Bos taurus (Bovine).